The chain runs to 395 residues: Flap endonuclease 1 (395 aa).

The interval 1–108 is N-domain; that stretch reads MGILGLSKLL…DELEMRRQKA (108 aa). Asp34 provides a ligand contact to Mg(2+). Arg74 lines the DNA pocket. 5 residues coordinate Mg(2+): Asp90, Glu162, Glu164, Asp183, and Asp185. The I-domain stretch occupies residues 126–257; that stretch reads MMEKMSKRTV…QKAWEGIQRY (132 aa). Glu162 contacts DNA. Positions 235 and 237 each coordinate DNA. Mg(2+) is bound at residue Asp237. Residues 340-348 are interaction with PCNA; sequence TQGRLDSFF.

The protein belongs to the XPG/RAD2 endonuclease family. FEN1 subfamily. Interacts with PCNA. Three molecules of FEN1 bind to one PCNA trimer with each molecule binding to one PCNA monomer. PCNA stimulates the nuclease activity without altering cleavage specificity. Mg(2+) serves as cofactor. In terms of processing, phosphorylated. Phosphorylation upon DNA damage induces relocalization to the nuclear plasma.

It localises to the nucleus. The protein resides in the nucleolus. The protein localises to the nucleoplasm. Its subcellular location is the mitochondrion. Its function is as follows. Structure-specific nuclease with 5'-flap endonuclease and 5'-3' exonuclease activities involved in DNA replication and repair. During DNA replication, cleaves the 5'-overhanging flap structure that is generated by displacement synthesis when DNA polymerase encounters the 5'-end of a downstream Okazaki fragment. It enters the flap from the 5'-end and then tracks to cleave the flap base, leaving a nick for ligation. Also involved in the long patch base excision repair (LP-BER) pathway, by cleaving within the apurinic/apyrimidinic (AP) site-terminated flap. Acts as a genome stabilization factor that prevents flaps from equilibrating into structures that lead to duplications and deletions. Also possesses 5'-3' exonuclease activity on nicked or gapped double-stranded DNA, and exhibits RNase H activity. Also involved in replication and repair of rDNA and in repairing mitochondrial DNA. The polypeptide is Flap endonuclease 1 (Leishmania infantum).